The chain runs to 152 residues: Neuropeptide W (152 aa).

Residues 1-32 (MGARGPGPGATARRRLLALLLLLLLLPLPARA) form the signal peptide. Residues 65 to 152 (ALRPAAGPLA…LGASSWTSAE (88 aa)) constitute a propeptide that is removed on maturation. Disordered stretches follow at residues 79–108 (GQDV…LPPG) and 122–152 (SGIP…TSAE). Pro residues predominate over residues 96–106 (GPAPRDAPLLP).

It belongs to the neuropeptide B/W family.

It localises to the secreted. Functionally, plays a regulatory role in the organization of neuroendocrine signals accessing the anterior pituitary gland. Stimulates water drinking and food intake. May play a role in the hypothalamic response to stress. The protein is Neuropeptide W (NPW) of Sus scrofa (Pig).